The sequence spans 359 residues: 3-dehydroquinate synthase (359 aa).

NAD(+)-binding positions include 105-109 (GVVGD), 129-130 (TT), Lys142, Lys151, and 169-172 (TIKT). Zn(2+) is bound by residues Glu184, His247, and His263.

Belongs to the sugar phosphate cyclases superfamily. Dehydroquinate synthase family. Co(2+) serves as cofactor. Zn(2+) is required as a cofactor. It depends on NAD(+) as a cofactor.

The protein localises to the cytoplasm. It catalyses the reaction 7-phospho-2-dehydro-3-deoxy-D-arabino-heptonate = 3-dehydroquinate + phosphate. It participates in metabolic intermediate biosynthesis; chorismate biosynthesis; chorismate from D-erythrose 4-phosphate and phosphoenolpyruvate: step 2/7. Its function is as follows. Catalyzes the conversion of 3-deoxy-D-arabino-heptulosonate 7-phosphate (DAHP) to dehydroquinate (DHQ). This Ruminiclostridium cellulolyticum (strain ATCC 35319 / DSM 5812 / JCM 6584 / H10) (Clostridium cellulolyticum) protein is 3-dehydroquinate synthase.